Here is a 283-residue protein sequence, read N- to C-terminus: MIARILDGRTCAEKVKARVKENIRLLQEKGLPSPGLAVILVGNDPASATYVAHKERACQAVGIRSTVYRMPNTITESELASKIDECNRDSNTHGILLQLPLPAHIDSANLLERIRPDKDVDGFHPYNLGRLVQRRPALRPCTPYGVMTLLTETHENLEGKHAVIVGASNIVGRPMALELLLAKCTVTVCHRFTRDLAEHVKSAELLIVAIGKPGIIQSEWIKPGAIVIDVGFSRLSPNKIAGDIDFETAKERASWITPVPGGVGPMTVATLLENTLQAAQTFL.

Gly166–Ser168 contacts NADP(+).

This sequence belongs to the tetrahydrofolate dehydrogenase/cyclohydrolase family. In terms of assembly, homodimer.

It carries out the reaction (6R)-5,10-methylene-5,6,7,8-tetrahydrofolate + NADP(+) = (6R)-5,10-methenyltetrahydrofolate + NADPH. The enzyme catalyses (6R)-5,10-methenyltetrahydrofolate + H2O = (6R)-10-formyltetrahydrofolate + H(+). Its pathway is one-carbon metabolism; tetrahydrofolate interconversion. Catalyzes the oxidation of 5,10-methylenetetrahydrofolate to 5,10-methenyltetrahydrofolate and then the hydrolysis of 5,10-methenyltetrahydrofolate to 10-formyltetrahydrofolate. The protein is Bifunctional protein FolD of Coxiella burnetii (strain CbuG_Q212) (Coxiella burnetii (strain Q212)).